A 656-amino-acid chain; its full sequence is Hemocyanin subunit A (656 aa).

The signal sequence occupies residues 1 to 18; it reads MWSLALATLFVLGTVIRA. Cu cation-binding residues include His197, His201, and His227. Asn313 carries an N-linked (GlcNAc...) asparagine glycan. 3 residues coordinate Cu cation: His348, His352, and His388. A disulfide bridge links Cys558 with Cys606.

This sequence belongs to the tyrosinase family. Hemocyanin subfamily. As to quaternary structure, 36-chain polymer consisting of 6 hexamers, each of which includes 4 different chains, A, B, C and D. In terms of tissue distribution, hemolymph.

It is found in the secreted. The protein localises to the extracellular space. In terms of biological role, hemocyanins are copper-containing oxygen carriers occurring freely dissolved in the hemolymph of many mollusks and arthropods. The polypeptide is Hemocyanin subunit A (HCA) (Scutigera coleoptrata (House centipede)).